A 125-amino-acid chain; its full sequence is MAPVKKQGGKKKKQILKFTLDCTHPVEDGIMDAANFEQFLQERIKVNGKSGNLGNGVVSIERXXSKISVNSEVPFSKRYLKYLTKKYLKKNNLRDWLRVVANTKESYELRYFQINQDEEEIHMTS.

This sequence belongs to the eukaryotic ribosomal protein eL22 family. As to quaternary structure, component of the large ribosomal subunit.

It is found in the cytoplasm. Component of the large ribosomal subunit. The ribosome is a large ribonucleoprotein complex responsible for the synthesis of proteins in the cell. The protein is Large ribosomal subunit protein eL22 (rpl22) of Gadus morhua (Atlantic cod).